The following is a 113-amino-acid chain: Large ribosomal subunit protein uL22 (113 aa).

This sequence belongs to the universal ribosomal protein uL22 family. As to quaternary structure, part of the 50S ribosomal subunit.

Functionally, this protein binds specifically to 23S rRNA; its binding is stimulated by other ribosomal proteins, e.g. L4, L17, and L20. It is important during the early stages of 50S assembly. It makes multiple contacts with different domains of the 23S rRNA in the assembled 50S subunit and ribosome. The globular domain of the protein is located near the polypeptide exit tunnel on the outside of the subunit, while an extended beta-hairpin is found that lines the wall of the exit tunnel in the center of the 70S ribosome. The protein is Large ribosomal subunit protein uL22 of Thermus thermophilus (strain ATCC BAA-163 / DSM 7039 / HB27).